The sequence spans 356 residues: uncharacterized protein (356 aa).

37–44 (TGASSGIG) contacts NADP(+). Ser-168 is a binding site for substrate. Tyr-181 serves as the catalytic Proton acceptor.

This sequence belongs to the short-chain dehydrogenases/reductases (SDR) family.

This is an uncharacterized protein from Bacillus subtilis (strain 168).